The following is a 561-amino-acid chain: TBC1 domain family member 24 (561 aa).

A 1,2-diacyl-sn-glycero-3-phospho-(1D-myo-inositol)-binding residues include K36 and R40. The Rab-GAP TBC domain maps to 45–236; the sequence is AQSHTLRGKV…RVFDVFLVEG (192 aa). Residues K238, R242, and 293–297 each bind a 1,2-diacyl-sn-glycero-3-phospho-(1D-myo-inositol); that span reads RLFSR. The TLDc domain occupies 343 to 556; that stretch reads EIVSVKEMRD…IAAVEAWGFQ (214 aa). Phosphoserine occurs at positions 475 and 482.

In terms of assembly, interacts with ARF6. Expressed in brain, particularly at the level of the cortex and the hippocampus. Expressed in the inner ear in spiral ganglion cells, a collection of neurons critical for hearing and balance.

It localises to the cell membrane. The protein localises to the cytoplasm. Its subcellular location is the cytoplasmic vesicle membrane. It is found in the presynapse. Its function is as follows. May act as a GTPase-activating protein for Rab family protein(s). Involved in neuronal projections development, probably through a negative modulation of ARF6 function. Involved in the regulation of synaptic vesicle trafficking. This is TBC1 domain family member 24 (Tbc1d24) from Mus musculus (Mouse).